We begin with the raw amino-acid sequence, 212 residues long: Uridine kinase (212 aa).

An ATP-binding site is contributed by 13–20; sequence GASASGKS.

Belongs to the uridine kinase family.

Its subcellular location is the cytoplasm. The catalysed reaction is uridine + ATP = UMP + ADP + H(+). It carries out the reaction cytidine + ATP = CMP + ADP + H(+). It functions in the pathway pyrimidine metabolism; CTP biosynthesis via salvage pathway; CTP from cytidine: step 1/3. Its pathway is pyrimidine metabolism; UMP biosynthesis via salvage pathway; UMP from uridine: step 1/1. The chain is Uridine kinase from Shewanella putrefaciens (strain CN-32 / ATCC BAA-453).